Here is a 282-residue protein sequence, read N- to C-terminus: MNMAETQLNPIARPTAPAGFDPAQSGQSQAPSRPKIEINDLNFFYGKYHALKNINLQIPEGKVTAFIGPSGCGKSTLLRTLNKMYALYPEQRAEGEILMDGENLLTTKRDISLLRARIGMVFQKPTPFPMSIYDNIAFGVKMFETLPRSEMDDRVEWALTKAALWNEVKDKLGQSGYGLSGGQQQRLCIARGIAIRPEVLLLDEPCSALDPISTGRIEELIAELKSDYTVVIVTHNMQQAARCSDYTAYMYLGELIEFGDTEKIFIKPVRKETEDYITGRFG.

Residues 1-33 (MNMAETQLNPIARPTAPAGFDPAQSGQSQAPSR) form a disordered region. The 242-residue stretch at 36 to 277 (IEINDLNFFY…PVRKETEDYI (242 aa)) folds into the ABC transporter domain. 68–75 (GPSGCGKS) serves as a coordination point for ATP.

It belongs to the ABC transporter superfamily. Phosphate importer (TC 3.A.1.7) family. In terms of assembly, the complex is composed of two ATP-binding proteins (PstB), two transmembrane proteins (PstC and PstA) and a solute-binding protein (PstS).

The protein localises to the cell inner membrane. The catalysed reaction is phosphate(out) + ATP + H2O = ADP + 2 phosphate(in) + H(+). Functionally, part of the ABC transporter complex PstSACB involved in phosphate import. Responsible for energy coupling to the transport system. The chain is Phosphate import ATP-binding protein PstB from Paraburkholderia xenovorans (strain LB400).